The sequence spans 67 residues: ATP synthase protein 8 (67 aa).

A helical transmembrane segment spans residues T8 to F24. K54 bears the N6-acetyllysine; alternate mark. At K54 the chain carries N6-succinyllysine; alternate. K57 carries the post-translational modification N6-acetyllysine.

Belongs to the ATPase protein 8 family. As to quaternary structure, F-type ATPases have 2 components, CF(1) - the catalytic core - and CF(0) - the membrane proton channel. Component of an ATP synthase complex composed of ATP5PB, ATP5MC1, ATP5F1E, ATP5PD, ATP5ME, ATP5PF, ATP5MF, MT-ATP6, MT-ATP8, ATP5F1A, ATP5F1B, ATP5F1D, ATP5F1C, ATP5PO, ATP5MG, ATP5MK and ATP5MJ. Interacts with PRICKLE3.

The protein resides in the mitochondrion membrane. In terms of biological role, mitochondrial membrane ATP synthase (F(1)F(0) ATP synthase or Complex V) produces ATP from ADP in the presence of a proton gradient across the membrane which is generated by electron transport complexes of the respiratory chain. F-type ATPases consist of two structural domains, F(1) - containing the extramembraneous catalytic core and F(0) - containing the membrane proton channel, linked together by a central stalk and a peripheral stalk. During catalysis, ATP synthesis in the catalytic domain of F(1) is coupled via a rotary mechanism of the central stalk subunits to proton translocation. Part of the complex F(0) domain. Minor subunit located with subunit a in the membrane. In Rhinoceros unicornis (Greater Indian rhinoceros), this protein is ATP synthase protein 8 (MT-ATP8).